We begin with the raw amino-acid sequence, 310 residues long: Bacteriochlorophyll synthase 34 kDa chain (310 aa).

Polar residues predominate over residues 1-13; sequence MSDMSDQTRLSSP. The disordered stretch occupies residues 1 to 20; that stretch reads MSDMSDQTRLSSPPSLPLHK. Helical transmembrane passes span 39–59, 67–87, 112–132, 134–154, 166–186, 187–207, 248–268, and 287–307; these read VTWF…GALG, LLLG…VVND, HVYI…LFLG, QVAF…LRPI, LVAI…FAPL, TGES…IMTV, VIGL…AILL, and VFFN…AAIG.

Its subcellular location is the cell membrane. It functions in the pathway porphyrin-containing compound metabolism; bacteriochlorophyll biosynthesis (light-independent). In terms of biological role, catalyzes the esterification of bacteriochlorophyllide a by geranylgeraniol-PPi. The chain is Bacteriochlorophyll synthase 34 kDa chain (bchG) from Chloroflexus aurantiacus (strain ATCC 29366 / DSM 635 / J-10-fl).